Reading from the N-terminus, the 132-residue chain is Small ribosomal subunit protein uS8 (132 aa).

It belongs to the universal ribosomal protein uS8 family. As to quaternary structure, part of the 30S ribosomal subunit. Contacts proteins S5 and S12.

Functionally, one of the primary rRNA binding proteins, it binds directly to 16S rRNA central domain where it helps coordinate assembly of the platform of the 30S subunit. This Levilactobacillus brevis (strain ATCC 367 / BCRC 12310 / CIP 105137 / JCM 1170 / LMG 11437 / NCIMB 947 / NCTC 947) (Lactobacillus brevis) protein is Small ribosomal subunit protein uS8.